We begin with the raw amino-acid sequence, 235 residues long: Carbohydrate deacetylase (235 aa).

2 residues coordinate Mg(2+): His61 and His124.

Belongs to the YdjC deacetylase family. Requires Mg(2+) as cofactor.

In terms of biological role, probably catalyzes the deacetylation of acetylated carbohydrates an important step in the degradation of oligosaccharides. The chain is Carbohydrate deacetylase from Bacillus cereus (strain B4264).